We begin with the raw amino-acid sequence, 287 residues long: Pyridoxal kinase PdxY (287 aa).

Substrate-binding positions include Ser10 and 45-46 (TQ). Residues Asp112, Ala144, Glu149, Lys182, and 209-212 (RPLV) contribute to the ATP site. Position 224 (Asp224) interacts with substrate.

The protein belongs to the pyridoxine kinase family. PdxY subfamily. In terms of assembly, homodimer. Mg(2+) is required as a cofactor.

It catalyses the reaction pyridoxal + ATP = pyridoxal 5'-phosphate + ADP + H(+). It functions in the pathway cofactor metabolism; pyridoxal 5'-phosphate salvage; pyridoxal 5'-phosphate from pyridoxal: step 1/1. Functionally, pyridoxal kinase involved in the salvage pathway of pyridoxal 5'-phosphate (PLP). Catalyzes the phosphorylation of pyridoxal to PLP. In Escherichia coli (strain UTI89 / UPEC), this protein is Pyridoxal kinase PdxY.